We begin with the raw amino-acid sequence, 250 residues long: NAD(P)H-quinone oxidoreductase subunit K (250 aa).

[4Fe-4S] cluster-binding residues include Cys60, Cys61, Cys125, and Cys156. The tract at residues 230 to 250 (ELNTPEIDVSPASQSSSTYES) is disordered. The segment covering 240–250 (PASQSSSTYES) has biased composition (polar residues).

This sequence belongs to the complex I 20 kDa subunit family. As to quaternary structure, NDH-1 can be composed of about 15 different subunits; different subcomplexes with different compositions have been identified which probably have different functions. [4Fe-4S] cluster is required as a cofactor.

It is found in the cellular thylakoid membrane. The catalysed reaction is a plastoquinone + NADH + (n+1) H(+)(in) = a plastoquinol + NAD(+) + n H(+)(out). The enzyme catalyses a plastoquinone + NADPH + (n+1) H(+)(in) = a plastoquinol + NADP(+) + n H(+)(out). In terms of biological role, NDH-1 shuttles electrons from an unknown electron donor, via FMN and iron-sulfur (Fe-S) centers, to quinones in the respiratory and/or the photosynthetic chain. The immediate electron acceptor for the enzyme in this species is believed to be plastoquinone. Couples the redox reaction to proton translocation, and thus conserves the redox energy in a proton gradient. Cyanobacterial NDH-1 also plays a role in inorganic carbon-concentration. The protein is NAD(P)H-quinone oxidoreductase subunit K of Prochlorococcus marinus (strain MIT 9313).